Here is a 186-residue protein sequence, read N- to C-terminus: ATP synthase subunit delta (186 aa).

The protein belongs to the ATPase delta chain family. In terms of assembly, F-type ATPases have 2 components, F(1) - the catalytic core - and F(0) - the membrane proton channel. F(1) has five subunits: alpha(3), beta(3), gamma(1), delta(1), epsilon(1). F(0) has three main subunits: a(1), b(2) and c(10-14). The alpha and beta chains form an alternating ring which encloses part of the gamma chain. F(1) is attached to F(0) by a central stalk formed by the gamma and epsilon chains, while a peripheral stalk is formed by the delta and b chains.

The protein resides in the cellular chromatophore membrane. In terms of biological role, f(1)F(0) ATP synthase produces ATP from ADP in the presence of a proton or sodium gradient. F-type ATPases consist of two structural domains, F(1) containing the extramembraneous catalytic core and F(0) containing the membrane proton channel, linked together by a central stalk and a peripheral stalk. During catalysis, ATP synthesis in the catalytic domain of F(1) is coupled via a rotary mechanism of the central stalk subunits to proton translocation. Functionally, this protein is part of the stalk that links CF(0) to CF(1). It either transmits conformational changes from CF(0) to CF(1) or is implicated in proton conduction. This Rhodobacter capsulatus (Rhodopseudomonas capsulata) protein is ATP synthase subunit delta.